A 186-amino-acid chain; its full sequence is ATP synthase subunit delta (186 aa).

This sequence belongs to the ATPase delta chain family. As to quaternary structure, F-type ATPases have 2 components, F(1) - the catalytic core - and F(0) - the membrane proton channel. F(1) has five subunits: alpha(3), beta(3), gamma(1), delta(1), epsilon(1). CF(0) has four main subunits: a(1), b(1), b'(1) and c(10-14). The alpha and beta chains form an alternating ring which encloses part of the gamma chain. F(1) is attached to F(0) by a central stalk formed by the gamma and epsilon chains, while a peripheral stalk is formed by the delta, b and b' chains.

The protein localises to the cell inner membrane. In terms of biological role, f(1)F(0) ATP synthase produces ATP from ADP in the presence of a proton or sodium gradient. F-type ATPases consist of two structural domains, F(1) containing the extramembraneous catalytic core and F(0) containing the membrane proton channel, linked together by a central stalk and a peripheral stalk. During catalysis, ATP synthesis in the catalytic domain of F(1) is coupled via a rotary mechanism of the central stalk subunits to proton translocation. This protein is part of the stalk that links CF(0) to CF(1). It either transmits conformational changes from CF(0) to CF(1) or is implicated in proton conduction. This Rhodopseudomonas palustris (strain ATCC BAA-98 / CGA009) protein is ATP synthase subunit delta.